The primary structure comprises 386 residues: Putative acid--amine ligase YgiC (386 aa).

Residue 100 to 102 (RLD) participates in ATP binding. Mg(2+) contacts are provided by D102, E115, and N117. Residues K267, K302, G309, Q336, and 371 to 373 (LIT) contribute to the ATP site.

It belongs to the glutathionylspermidine synthase preATP-grasp family.

In terms of biological role, may be a ligase forming an amide bond. Shows ATPase activity. The chain is Putative acid--amine ligase YgiC (ygiC) from Escherichia coli O157:H7.